The chain runs to 492 residues: Glutamyl-tRNA(Gln) amidotransferase subunit A (492 aa).

Residues Lys78 and Ser158 each act as charge relay system in the active site. Ser182 serves as the catalytic Acyl-ester intermediate.

Belongs to the amidase family. GatA subfamily. In terms of assembly, heterotrimer of A, B and C subunits.

It catalyses the reaction L-glutamyl-tRNA(Gln) + L-glutamine + ATP + H2O = L-glutaminyl-tRNA(Gln) + L-glutamate + ADP + phosphate + H(+). Its function is as follows. Allows the formation of correctly charged Gln-tRNA(Gln) through the transamidation of misacylated Glu-tRNA(Gln) in organisms which lack glutaminyl-tRNA synthetase. The reaction takes place in the presence of glutamine and ATP through an activated gamma-phospho-Glu-tRNA(Gln). The chain is Glutamyl-tRNA(Gln) amidotransferase subunit A from Parvibaculum lavamentivorans (strain DS-1 / DSM 13023 / NCIMB 13966).